Reading from the N-terminus, the 144-residue chain is Deoxyuridine 5'-triphosphate nucleotidohydrolase (144 aa).

Substrate is bound by residues 63-65, Asn-76, and 80-82; these read RSG and TVD.

The protein belongs to the dUTPase family. Requires Mg(2+) as cofactor.

It catalyses the reaction dUTP + H2O = dUMP + diphosphate + H(+). It functions in the pathway pyrimidine metabolism; dUMP biosynthesis; dUMP from dCTP (dUTP route): step 2/2. This enzyme is involved in nucleotide metabolism: it produces dUMP, the immediate precursor of thymidine nucleotides and it decreases the intracellular concentration of dUTP so that uracil cannot be incorporated into DNA. The protein is Deoxyuridine 5'-triphosphate nucleotidohydrolase of Treponema denticola (strain ATCC 35405 / DSM 14222 / CIP 103919 / JCM 8153 / KCTC 15104).